Reading from the N-terminus, the 466-residue chain is Ribulose bisphosphate carboxylase large chain (466 aa).

Lys5 carries the post-translational modification N6,N6,N6-trimethyllysine. The substrate site is built by Asn114 and Thr164. Lys166 acts as the Proton acceptor in catalysis. Lys168 contributes to the substrate binding site. Mg(2+) contacts are provided by Lys192, Asp194, and Glu195. Lys192 is modified (N6-carboxylysine). Catalysis depends on His285, which acts as the Proton acceptor. 3 residues coordinate substrate: Arg286, His318, and Ser370.

This sequence belongs to the RuBisCO large chain family. Type I subfamily. Heterohexadecamer of 8 large chains and 8 small chains; disulfide-linked. The disulfide link is formed within the large subunit homodimers. Mg(2+) serves as cofactor. The disulfide bond which can form in the large chain dimeric partners within the hexadecamer appears to be associated with oxidative stress and protein turnover.

The protein localises to the plastid. It localises to the chloroplast. The catalysed reaction is 2 (2R)-3-phosphoglycerate + 2 H(+) = D-ribulose 1,5-bisphosphate + CO2 + H2O. The enzyme catalyses D-ribulose 1,5-bisphosphate + O2 = 2-phosphoglycolate + (2R)-3-phosphoglycerate + 2 H(+). Its function is as follows. RuBisCO catalyzes two reactions: the carboxylation of D-ribulose 1,5-bisphosphate, the primary event in carbon dioxide fixation, as well as the oxidative fragmentation of the pentose substrate in the photorespiration process. Both reactions occur simultaneously and in competition at the same active site. This chain is Ribulose bisphosphate carboxylase large chain, found in Drosera filiformis (Thread-leaved sundew).